Reading from the N-terminus, the 565-residue chain is Urocanate hydratase (565 aa).

Residues 58 to 59 (GG), Q136, 182 to 184 (GMG), E202, R207, 245 to 246 (NA), 266 to 270 (QTSAH), 276 to 277 (YL), and Y325 contribute to the NAD(+) site. Residue C413 is part of the active site. G495 serves as a coordination point for NAD(+).

It belongs to the urocanase family. NAD(+) serves as cofactor.

It localises to the cytoplasm. The catalysed reaction is 4-imidazolone-5-propanoate = trans-urocanate + H2O. The protein operates within amino-acid degradation; L-histidine degradation into L-glutamate; N-formimidoyl-L-glutamate from L-histidine: step 2/3. Functionally, catalyzes the conversion of urocanate to 4-imidazolone-5-propionate. The protein is Urocanate hydratase of Vibrio vulnificus (strain CMCP6).